Reading from the N-terminus, the 384-residue chain is Glucans biosynthesis protein C (384 aa).

10 consecutive transmembrane segments (helical) span residues 17-37 (AWLM…THSW), 54-74 (FIHA…SYML), 91-111 (VGIP…ILLQ), 140-160 (LWFL…FTWF), 173-193 (AISL…YAAI), 212-232 (FIVM…LAFI), 240-260 (FTTP…AYLL), 274-294 (TESV…FSLG), 311-331 (ASLF…AYIT), and 338-358 (LIGF…LYEI).

This sequence belongs to the acyltransferase 3 family. OpgC subfamily.

It localises to the cell membrane. It participates in glycan metabolism; osmoregulated periplasmic glucan (OPG) biosynthesis. Necessary for the succinyl substitution of periplasmic glucans. Could catalyze the transfer of succinyl residues from the cytoplasmic side of the membrane to the nascent glucan backbones on the periplasmic side of the membrane. The sequence is that of Glucans biosynthesis protein C from Salmonella agona (strain SL483).